Consider the following 707-residue polypeptide: D-(-)-3-hydroxybutyrate oligomer hydrolase (707 aa).

The first 24 residues, 1-24, serve as a signal peptide directing secretion; sequence MHHDNFRRLGNAAFAAAAALLAVA. Ser-311 serves as the catalytic Charge relay system.

The protein belongs to the D-(-)-3-hydroxybutyrate oligomer hydrolase family.

It is found in the secreted. It carries out the reaction (3R)-hydroxybutanoate dimer + H2O = 2 (R)-3-hydroxybutanoate + H(+). It functions in the pathway lipid metabolism; butanoate metabolism. Functionally, participates in the degradation of poly-3-hydroxybutyrate (PHB). It works downstream of poly(3-hydroxybutyrate) depolymerase, hydrolyzing D(-)-3-hydroxybutyrate oligomers of various length (3HB-oligomers) into 3HB-monomers. The sequence is that of D-(-)-3-hydroxybutyrate oligomer hydrolase from Cupriavidus pinatubonensis (strain JMP 134 / LMG 1197) (Cupriavidus necator (strain JMP 134)).